The sequence spans 1151 residues: Cation channel sperm-associated protein subunit gamma 1 (1151 aa).

The first 38 residues, 1 to 38 (MVSRPAMSPVSPVWPRKPNLWAFWVLRLVLLLSLKSWA), serve as a signal peptide directing secretion. Residues 39-1063 (EDTLQHCTWL…GLPLSSKRSS (1025 aa)) lie on the Extracellular side of the membrane. The N-linked (GlcNAc...) asparagine glycan is linked to N356. The chain crosses the membrane as a helical span at residues 1064–1084 (FIVMVSTSFFIALVVFYILFC). At 1085 to 1151 (LVWPHIVKAW…NVQAKRAKVA (67 aa)) the chain is on the cytoplasmic side. Over residues 1113–1123 (SSSSGGFTLHS) the composition is skewed to low complexity. Residues 1113-1151 (SSSSGGFTLHSHSSEGSFEGPSRPGTKEDNVQAKRAKVA) are disordered.

Belongs to the CATSPERG family.

The protein resides in the membrane. This Mus musculus (Mouse) protein is Cation channel sperm-associated protein subunit gamma 1 (Catsperg1).